A 475-amino-acid chain; its full sequence is Ribulose bisphosphate carboxylase large chain (475 aa).

A propeptide spanning residues 1-2 (MS) is cleaved from the precursor. Pro3 carries the N-acetylproline modification. At Lys14 the chain carries N6,N6,N6-trimethyllysine. Positions 123 and 173 each coordinate substrate. Residue Lys175 is the Proton acceptor of the active site. Lys177 serves as a coordination point for substrate. Mg(2+) contacts are provided by Lys201, Asp203, and Glu204. Residue Lys201 is modified to N6-carboxylysine. His294 functions as the Proton acceptor in the catalytic mechanism. 3 residues coordinate substrate: Arg295, His327, and Ser379.

This sequence belongs to the RuBisCO large chain family. Type I subfamily. Heterohexadecamer of 8 large chains and 8 small chains; disulfide-linked. The disulfide link is formed within the large subunit homodimers. The cofactor is Mg(2+). In terms of processing, the disulfide bond which can form in the large chain dimeric partners within the hexadecamer appears to be associated with oxidative stress and protein turnover.

The protein localises to the plastid. It localises to the chloroplast. The catalysed reaction is 2 (2R)-3-phosphoglycerate + 2 H(+) = D-ribulose 1,5-bisphosphate + CO2 + H2O. It catalyses the reaction D-ribulose 1,5-bisphosphate + O2 = 2-phosphoglycolate + (2R)-3-phosphoglycerate + 2 H(+). RuBisCO catalyzes two reactions: the carboxylation of D-ribulose 1,5-bisphosphate, the primary event in carbon dioxide fixation, as well as the oxidative fragmentation of the pentose substrate in the photorespiration process. Both reactions occur simultaneously and in competition at the same active site. In Populus trichocarpa (Western balsam poplar), this protein is Ribulose bisphosphate carboxylase large chain.